A 327-amino-acid chain; its full sequence is rRNA 2'-O-methyltransferase fibrillarin (327 aa).

The segment at 1-93 (MKPGFSPRGG…RGNQSGKNVM (93 aa)) is disordered. Residues 7-80 (PRGGGFGGRG…GGGRGRGGGR (74 aa)) are compositionally biased toward gly residues. An asymmetric dimethylarginine mark is found at arginine 8, arginine 15, arginine 21, arginine 24, arginine 28, and arginine 31. Glycyl lysine isopeptide (Lys-Gly) (interchain with G-Cter in SUMO2) cross-links involve residues lysine 90, lysine 108, and lysine 115. Position 108 is an N6-acetyllysine (lysine 108). A Phosphoserine modification is found at serine 122. An N6-acetyllysine modification is found at lysine 127. Phosphoserine is present on residues serine 130 and serine 132. Residues lysine 137, lysine 149, and lysine 164 each participate in a glycyl lysine isopeptide (Lys-Gly) (interchain with G-Cter in SUMO2) cross-link. Residues 178-179 (TT) and 197-198 (EF) each bind S-adenosyl-L-methionine. N6-acetyllysine occurs at positions 211 and 212. Residues 222–223 (DA) and 242–245 (DVAQ) each bind S-adenosyl-L-methionine.

Belongs to the methyltransferase superfamily. Fibrillarin family. Component of box C/D small nucleolar ribonucleoprotein (snoRNP) particles that contain SNU13, FBL, NOP5 and NOP56, plus a guide RNA. It is associated with the U3, U8, U13, X and Y small nuclear RNAs. Component of several ribosomal and nucleolar protein complexes. Part of the small subunit (SSU) processome, composed of more than 70 proteins and the RNA chaperone small nucleolar RNA (snoRNA) U3. Interacts with PRMT5 and UTP20. Interacts with DDX5 and C1QBP. Interacts with NOL11. Interacts with PIH1D1. Interacts with RRP1B. Interacts with NOLC1. Interacts with SDE2. Interacts with NOP2 and NOP56. Post-translationally, ubiquitinated. Ubiquitination leads to proteasomal degradation. Deubiquitinated by USP36. By homology to other fibrillarins, some or all of the N-terminal domain arginines are modified to asymmetric dimethylarginine (DMA). In terms of processing, acetylated by CREBBP/CBP, preventing methylation of 'Gln-105' of histone H2A (H2AQ104me), without affecting rRNA methylation. Deacetylation by SIRT7 restores methylation of 'Gln-105' of histone H2A (H2AQ104me).

It localises to the nucleus. Its subcellular location is the nucleolus. It is found in the nucleoplasm. It carries out the reaction L-glutaminyl-[histone H2A] + S-adenosyl-L-methionine = N(5)-methyl-L-glutaminyl-[histone H2A] + S-adenosyl-L-homocysteine + H(+). The catalysed reaction is a ribonucleotide in rRNA + S-adenosyl-L-methionine = a 2'-O-methylribonucleotide in rRNA + S-adenosyl-L-homocysteine + H(+). The enzyme catalyses a ribonucleotide in U6 snRNA + S-adenosyl-L-methionine = a 2'-O-methylribonucleotide in U6 snRNA + S-adenosyl-L-homocysteine + H(+). Functionally, S-adenosyl-L-methionine-dependent methyltransferase that has the ability to methylate both RNAs and proteins. Involved in pre-rRNA processing by catalyzing the site-specific 2'-hydroxyl methylation of ribose moieties in pre-ribosomal RNA. Site specificity is provided by a guide RNA that base pairs with the substrate. Methylation occurs at a characteristic distance from the sequence involved in base pairing with the guide RNA. Probably catalyzes 2'-O-methylation of U6 snRNAs in box C/D RNP complexes. U6 snRNA 2'-O-methylation is required for mRNA splicing fidelity. Also acts as a protein methyltransferase by mediating methylation of 'Gln-105' of histone H2A (H2AQ104me), a modification that impairs binding of the FACT complex and is specifically present at 35S ribosomal DNA locus. Part of the small subunit (SSU) processome, first precursor of the small eukaryotic ribosomal subunit. During the assembly of the SSU processome in the nucleolus, many ribosome biogenesis factors, an RNA chaperone and ribosomal proteins associate with the nascent pre-rRNA and work in concert to generate RNA folding, modifications, rearrangements and cleavage as well as targeted degradation of pre-ribosomal RNA by the RNA exosome. The sequence is that of rRNA 2'-O-methyltransferase fibrillarin (Fbl) from Rattus norvegicus (Rat).